A 513-amino-acid polypeptide reads, in one-letter code: ATP synthase subunit alpha 1 (513 aa).

169 to 176 is an ATP binding site; sequence GDRQTGKT.

The protein belongs to the ATPase alpha/beta chains family. In terms of assembly, F-type ATPases have 2 components, CF(1) - the catalytic core - and CF(0) - the membrane proton channel. CF(1) has five subunits: alpha(3), beta(3), gamma(1), delta(1), epsilon(1). CF(0) has three main subunits: a(1), b(2) and c(9-12). The alpha and beta chains form an alternating ring which encloses part of the gamma chain. CF(1) is attached to CF(0) by a central stalk formed by the gamma and epsilon chains, while a peripheral stalk is formed by the delta and b chains.

The protein resides in the cell inner membrane. It carries out the reaction ATP + H2O + 4 H(+)(in) = ADP + phosphate + 5 H(+)(out). Its function is as follows. Produces ATP from ADP in the presence of a proton gradient across the membrane. The alpha chain is a regulatory subunit. The sequence is that of ATP synthase subunit alpha 1 from Nitrosomonas eutropha (strain DSM 101675 / C91 / Nm57).